We begin with the raw amino-acid sequence, 160 residues long: Small ribosomal subunit protein uS7 (160 aa).

It belongs to the universal ribosomal protein uS7 family. As to quaternary structure, part of the 30S ribosomal subunit. Contacts proteins S9 and S11.

Its function is as follows. One of the primary rRNA binding proteins, it binds directly to 16S rRNA where it nucleates assembly of the head domain of the 30S subunit. Is located at the subunit interface close to the decoding center, probably blocks exit of the E-site tRNA. This chain is Small ribosomal subunit protein uS7, found in Anaplasma marginale (strain Florida).